The chain runs to 898 residues: Serine/threonine-protein kinase TAO3 (898 aa).

The Protein kinase domain maps to 24–277; the sequence is FIDLHEIGHG…AVELLRHDFI (254 aa). ATP-binding positions include 30–38 and Lys-53; that span reads IGHGSFGAV. The active-site Proton acceptor is the Asp-147. Disordered regions lie at residues 316–375 and 405–424; these read TRNG…DESS and DEAGHGDPRPEPRPTQSVQS. Phosphoserine; by ATM is present on Ser-324. Ser-343, Ser-346, and Ser-349 each carry phosphoserine. A compositionally biased stretch (low complexity) spans 349-366; that stretch reads SIPSTSVSTGSRSSSVNS. Thr-357 carries the phosphothreonine modification. Position 359 is a phosphoserine (Ser-359). Residues 405-416 show a composition bias toward basic and acidic residues; the sequence is DEAGHGDPRPEP. The residue at position 442 (Ser-442) is a Phosphoserine. Coiled coils occupy residues 452–502, 548–649, and 754–871; these read EQEN…THAN, FLES…HAML, and LKTL…QERE. The segment at 565-596 is disordered; it reads EEMNEDHSTPKKEKQERISKHKENLQHTQAEE. At Lys-830 the chain carries N6-acetyllysine.

It belongs to the protein kinase superfamily. STE Ser/Thr protein kinase family. STE20 subfamily. Self-associates. Interacts with ERN1 and TRAF2. Interaction with TRAF2 is facilitated under ER stress conditions, such as treatment with tunicamycin, and may promote TRAF2 phosphorylation. Interacts (via N-terminus) with STK25; the interaction promotes STK25 abundance at the level of protein expression and/or stability. In terms of processing, autophosphorylated. Phosphorylation at Ser-324 by ATM following DNA damage is required for activation of the p38/MAPK14 stress-activated MAPK cascade. Phosphorylated at Ser-324 and on Tyr residues during T cell activation. Phosphorylated by LRRK2.

It is found in the cytoplasm. The protein localises to the cell membrane. The protein resides in the membrane raft. It localises to the lipid droplet. The enzyme catalyses L-seryl-[protein] + ATP = O-phospho-L-seryl-[protein] + ADP + H(+). It catalyses the reaction L-threonyl-[protein] + ATP = O-phospho-L-threonyl-[protein] + ADP + H(+). Serine/threonine-protein kinase that acts as a regulator of the p38/MAPK14 stress-activated MAPK cascade and of the MAPK8/JNK cascade. In response to DNA damage, involved in the G2/M transition DNA damage checkpoint by activating the p38/MAPK14 stress-activated MAPK cascade, probably by mediating phosphorylation of upstream MAP2K3 and MAP2K6 kinases. Inhibits basal activity of the MAPK8/JNK cascade and diminishes its activation in response to epidermal growth factor (EGF). Positively regulates canonical T cell receptor (TCR) signaling by preventing early PTPN6/SHP1-mediated inactivation of LCK, ensuring sustained TCR signaling that is required for optimal activation and differentiation of T cells. Phosphorylates PTPN6/SHP1 on 'Thr-394', leading to its polyubiquitination and subsequent proteasomal degradation. Required for cell surface expression of metalloprotease ADAM10 on type 1 transitional B cells which is necessary for their NOTCH-mediated development into marginal zone B cells. Also required for the NOTCH-mediated terminal differentiation of splenic conventional type 2 dendritic cells. Positively regulates osteoblast differentiation by acting as an upstream activator of the JNK pathway. Promotes JNK signaling in hepatocytes and positively regulates hepatocyte lipid storage by inhibiting beta-oxidation and triacylglycerol secretion while enhancing lipid synthesis. Restricts age-associated inflammation by negatively regulating differentiation of macrophages and their production of pro-inflammatory cytokines. Plays a role in negatively regulating the abundance of regulatory T cells in white adipose tissue. This is Serine/threonine-protein kinase TAO3 (Taok3) from Mus musculus (Mouse).